Here is a 382-residue protein sequence, read N- to C-terminus: Anhydro-N-acetylmuramic acid kinase (382 aa).

9–16 (GTSLDGID) serves as a coordination point for ATP.

This sequence belongs to the anhydro-N-acetylmuramic acid kinase family.

It catalyses the reaction 1,6-anhydro-N-acetyl-beta-muramate + ATP + H2O = N-acetyl-D-muramate 6-phosphate + ADP + H(+). Its pathway is amino-sugar metabolism; 1,6-anhydro-N-acetylmuramate degradation. The protein operates within cell wall biogenesis; peptidoglycan recycling. Functionally, catalyzes the specific phosphorylation of 1,6-anhydro-N-acetylmuramic acid (anhMurNAc) with the simultaneous cleavage of the 1,6-anhydro ring, generating MurNAc-6-P. Is required for the utilization of anhMurNAc either imported from the medium or derived from its own cell wall murein, and thus plays a role in cell wall recycling. This chain is Anhydro-N-acetylmuramic acid kinase, found in Bacillus cereus (strain G9842).